We begin with the raw amino-acid sequence, 277 residues long: Transport and Golgi organization protein 11 (277 aa).

Over 1-256 (MVTPQSPTPM…NNEQRTQREK (256 aa)) the chain is Cytoplasmic. Disordered regions lie at residues 124 to 148 (HFPS…NDLD) and 167 to 200 (VARM…LNQQ). 4 positions are modified to phosphoserine: Ser-127, Ser-129, Ser-132, and Ser-133. Polar residues predominate over residues 174 to 200 (GNDTNSVESDSQLTTGSASKRSQLNQQ). The residue at position 177 (Thr-177) is a Phosphothreonine. Ser-179, Ser-182, and Ser-190 each carry phosphoserine. Residues Thr-216 and Thr-222 each carry the phosphothreonine modification. Residues 225–253 (EEILYLRRQLAKLNRRVLNIEINNEQRTQ) adopt a coiled-coil conformation. Residues 257–274 (IVYCLGLAYFVLKTIFWL) form a helical; Anchor for type IV membrane protein membrane-spanning segment. Over 275–277 (NRN) the chain is Lumenal.

The protein belongs to the Tango11 family.

It localises to the endoplasmic reticulum membrane. Its subcellular location is the mitochondrion outer membrane. It is found in the peroxisome. May play a role in mitochondrial and peroxisomal fission. The chain is Transport and Golgi organization protein 11 (Tango11) from Drosophila melanogaster (Fruit fly).